Reading from the N-terminus, the 331-residue chain is Syntaxin-43 (331 aa).

At 1–305 (MATRNRTLLF…KAERTQRQGG (305 aa)) the chain is on the cytoplasmic side. Disordered regions lie at residues 20–45 (VRAP…KSGL) and 59–80 (PNRS…GTIT). The segment covering 31-40 (TLTEHNSLTG) has biased composition (polar residues). The stretch at 124 to 154 (KEDQHQIETLTQEVTFLLKKSEKQLQRLSAA) forms a coiled coil. In terms of domain architecture, t-SNARE coiled-coil homology spans 235–297 (EEISIEREKE…DDGLKQLQKA (63 aa)). A helical; Anchor for type IV membrane protein transmembrane segment spans residues 306-326 (MVMCASVLVILCFIMLVLLIL). At 327-331 (KEILL) the chain is on the vesicular side.

This sequence belongs to the syntaxin family. As to quaternary structure, part of the t-SNARE complex. As to expression, expressed at low levels in roots, stems, flowers and leaves.

The protein localises to the golgi apparatus. It is found in the trans-Golgi network membrane. Its function is as follows. Contributes to the regulation of secretory and vacuolar transport pathways in the post-Golgi network, and to the maintenance of the Golgi apparatus and trans-Golgi network (TGN) morphologies. Vesicle trafficking protein that functions in the secretory pathway and mediates liposome fusion. Required for extracellular resistance responses to a fungal pathogen. Also involved in the protection of chloroplasts from salicylic acid-dependent biotic stress. The protein is Syntaxin-43 of Arabidopsis thaliana (Mouse-ear cress).